A 260-amino-acid chain; its full sequence is ATP-dependent zinc metalloprotease FTSH, chloroplastic (260 aa).

Histidine 219 is a binding site for Zn(2+). The active site involves glutamate 220. Histidine 223 contributes to the Zn(2+) binding site.

This sequence in the N-terminal section; belongs to the AAA ATPase family. It in the C-terminal section; belongs to the peptidase M41 family. Zn(2+) serves as cofactor.

The protein localises to the plastid. It localises to the chloroplast thylakoid membrane. Functionally, probable ATP-dependent zinc metallopeptidase. The sequence is that of ATP-dependent zinc metalloprotease FTSH, chloroplastic from Helianthus annuus (Common sunflower).